A 348-amino-acid chain; its full sequence is GPALPP motifs-containing protein 1 (348 aa).

Disordered regions lie at residues 1 to 163 (MARD…AKGP) and 177 to 317 (QRMK…DLKV). N-acetylalanine is present on Ala2. The GPALPP motif 1 motif lies at 7–12 (GPALPP). The span at 14-27 (FKERATVEDQERDP) shows a compositional bias: basic and acidic residues. Position 28 is a phosphoserine (Ser28). Positions 32-37 (GPALPP) match the GPALPP motif 2 motif. The segment covering 41–59 (SSSSDSSDSNEDSSSLSEE) has biased composition (low complexity). Residues 60–69 (GNQESEEDDA) show a composition bias toward acidic residues. The GPALPP motif 3 signature appears at 93–98 (GPALPP). Ser106 bears the Phosphoserine mark. The span at 108 to 117 (PRPIIGPALP) shows a compositional bias: pro residues. The GPALPP motif 4 motif lies at 113–118 (GPALPP). 3 positions are modified to phosphoserine: Ser138, Ser143, and Ser148. The span at 144-154 (EEAESGEDEDI) shows a compositional bias: acidic residues. Basic and acidic residues-rich tracts occupy residues 177–195 (QRMKEKLTKGDDDSPKPVT), 235–269 (PADRERKAKEIQEARKSLSKKDEENMLSGRDKRLA), 277–287 (ESKRSESLMDI), and 295–317 (KAAEDKNRHQERTPFDRDKDLKV). Residues Lys279 and Lys316 each participate in a glycyl lysine isopeptide (Lys-Gly) (interchain with G-Cter in SUMO2) cross-link.

In Rattus norvegicus (Rat), this protein is GPALPP motifs-containing protein 1 (Gpalpp1).